Here is a 171-residue protein sequence, read N- to C-terminus: Lipoprotein signal peptidase (171 aa).

Helical transmembrane passes span 8–28 (SFLW…YIVV), 64–84 (WQQY…VYFL), and 96–118 (SAYA…NGFV). Active-site residues include D120 and D138. Residues 133-153 (VFNIADIAICIGAGLLALDAF) traverse the membrane as a helical segment.

It belongs to the peptidase A8 family.

It is found in the cell inner membrane. It catalyses the reaction Release of signal peptides from bacterial membrane prolipoproteins. Hydrolyzes -Xaa-Yaa-Zaa-|-(S,diacylglyceryl)Cys-, in which Xaa is hydrophobic (preferably Leu), and Yaa (Ala or Ser) and Zaa (Gly or Ala) have small, neutral side chains.. Its pathway is protein modification; lipoprotein biosynthesis (signal peptide cleavage). Functionally, this protein specifically catalyzes the removal of signal peptides from prolipoproteins. The polypeptide is Lipoprotein signal peptidase (Haemophilus influenzae (strain 86-028NP)).